Here is a 459-residue protein sequence, read N- to C-terminus: Phosphoglucosamine mutase (459 aa).

Ser102 (phosphoserine intermediate) is an active-site residue. Ser102, Asp243, Asp245, and Asp247 together coordinate Mg(2+). Ser102 bears the Phosphoserine mark.

It belongs to the phosphohexose mutase family. It depends on Mg(2+) as a cofactor. In terms of processing, activated by phosphorylation.

It catalyses the reaction alpha-D-glucosamine 1-phosphate = D-glucosamine 6-phosphate. In terms of biological role, catalyzes the conversion of glucosamine-6-phosphate to glucosamine-1-phosphate. The chain is Phosphoglucosamine mutase from Bartonella henselae (strain ATCC 49882 / DSM 28221 / CCUG 30454 / Houston 1) (Rochalimaea henselae).